The primary structure comprises 550 residues: Hydroxylamine reductase (550 aa).

Residues C3, C6, C18, and C25 each contribute to the [2Fe-2S] cluster site. H249, E273, C317, C405, C433, C458, E492, and K494 together coordinate hybrid [4Fe-2O-2S] cluster. C405 bears the Cysteine persulfide mark.

Belongs to the HCP family. [2Fe-2S] cluster is required as a cofactor. It depends on hybrid [4Fe-2O-2S] cluster as a cofactor.

It localises to the cytoplasm. The catalysed reaction is A + NH4(+) + H2O = hydroxylamine + AH2 + H(+). Its function is as follows. Catalyzes the reduction of hydroxylamine to form NH(3) and H(2)O. In Salmonella enteritidis PT4 (strain P125109), this protein is Hydroxylamine reductase.